The primary structure comprises 512 residues: 2,3-bisphosphoglycerate-independent phosphoglycerate mutase (512 aa).

2 residues coordinate Mn(2+): Asp-12 and Ser-62. Catalysis depends on Ser-62, which acts as the Phosphoserine intermediate. Residues His-123, 153–154 (RD), Arg-185, Arg-191, 260–263 (RPDR), and Lys-333 each bind substrate. Mn(2+) is bound by residues Asp-400, His-404, Asp-441, His-442, and His-460.

It belongs to the BPG-independent phosphoglycerate mutase family. Monomer. Mn(2+) is required as a cofactor.

The enzyme catalyses (2R)-2-phosphoglycerate = (2R)-3-phosphoglycerate. Its pathway is carbohydrate degradation; glycolysis; pyruvate from D-glyceraldehyde 3-phosphate: step 3/5. In terms of biological role, catalyzes the interconversion of 2-phosphoglycerate and 3-phosphoglycerate. The chain is 2,3-bisphosphoglycerate-independent phosphoglycerate mutase from Clostridium perfringens (strain SM101 / Type A).